A 204-amino-acid polypeptide reads, in one-letter code: Cytochrome c biogenesis ATP-binding export protein CcmA (204 aa).

In terms of domain architecture, ABC transporter spans leucine 2–leucine 202. Glycine 34–threonine 41 serves as a coordination point for ATP.

Belongs to the ABC transporter superfamily. CcmA exporter (TC 3.A.1.107) family. In terms of assembly, the complex is composed of two ATP-binding proteins (CcmA) and two transmembrane proteins (CcmB).

The protein resides in the cell inner membrane. It carries out the reaction heme b(in) + ATP + H2O = heme b(out) + ADP + phosphate + H(+). Its function is as follows. Part of the ABC transporter complex CcmAB involved in the biogenesis of c-type cytochromes; once thought to export heme, this seems not to be the case, but its exact role is uncertain. Responsible for energy coupling to the transport system. In Aliivibrio fischeri (strain ATCC 700601 / ES114) (Vibrio fischeri), this protein is Cytochrome c biogenesis ATP-binding export protein CcmA.